We begin with the raw amino-acid sequence, 1045 residues long: Unconventional myosin-Ia (1045 aa).

Residues A11 to Q697 enclose the Myosin motor domain. Residue G104–T111 participates in ATP binding. Residues V574–D596 form an actin-binding region. IQ domains follow at residues A701–Q727, M723–V750, and M746–A774. Residues K861–V1044 enclose the TH1 domain.

Belongs to the TRAFAC class myosin-kinesin ATPase superfamily. Myosin family. In terms of tissue distribution, intestine.

Its function is as follows. Could play an important role in morphogenesis and function of intestinal microvilli. In Gallus gallus (Chicken), this protein is Unconventional myosin-Ia (MYO1A).